We begin with the raw amino-acid sequence, 103 residues long: Small ribosomal subunit protein uS14c (103 aa).

The interval 27 to 56 is disordered; sequence SKKKIRSKVSPLSLSEKTKMQEKLQSLPRN.

This sequence belongs to the universal ribosomal protein uS14 family. In terms of assembly, part of the 30S ribosomal subunit.

The protein resides in the plastid. It is found in the chloroplast. In terms of biological role, binds 16S rRNA, required for the assembly of 30S particles. In Zea mays (Maize), this protein is Small ribosomal subunit protein uS14c.